Consider the following 417-residue polypeptide: Serine hydroxymethyltransferase (417 aa).

Residues Leu-121 and 125–127 (GHL) each bind (6S)-5,6,7,8-tetrahydrofolate. At Lys-229 the chain carries N6-(pyridoxal phosphate)lysine. 355-357 (SPF) contacts (6S)-5,6,7,8-tetrahydrofolate.

This sequence belongs to the SHMT family. As to quaternary structure, homodimer. Pyridoxal 5'-phosphate serves as cofactor.

It localises to the cytoplasm. It carries out the reaction (6R)-5,10-methylene-5,6,7,8-tetrahydrofolate + glycine + H2O = (6S)-5,6,7,8-tetrahydrofolate + L-serine. The protein operates within one-carbon metabolism; tetrahydrofolate interconversion. It participates in amino-acid biosynthesis; glycine biosynthesis; glycine from L-serine: step 1/1. Catalyzes the reversible interconversion of serine and glycine with tetrahydrofolate (THF) serving as the one-carbon carrier. This reaction serves as the major source of one-carbon groups required for the biosynthesis of purines, thymidylate, methionine, and other important biomolecules. Also exhibits THF-independent aldolase activity toward beta-hydroxyamino acids, producing glycine and aldehydes, via a retro-aldol mechanism. In Citrobacter koseri (strain ATCC BAA-895 / CDC 4225-83 / SGSC4696), this protein is Serine hydroxymethyltransferase.